We begin with the raw amino-acid sequence, 254 residues long: tRNA (guanine-N(7)-)-methyltransferase (254 aa).

Residues 1-11 show a composition bias toward basic and acidic residues; sequence MSISDNSREEL. A disordered region spans residues 1-25; sequence MSISDNSREELGELPAGRPLQSEFN. Residues Glu83, Glu108, Asp135, and Asp158 each coordinate S-adenosyl-L-methionine. Asp158 is a catalytic residue. Lys162 is a binding site for substrate. The segment at 164 to 169 is interaction with RNA; sequence RHNKRR. Substrate contacts are provided by residues Asp194 and 232–235; that span reads TKFE.

This sequence belongs to the class I-like SAM-binding methyltransferase superfamily. TrmB family.

It catalyses the reaction guanosine(46) in tRNA + S-adenosyl-L-methionine = N(7)-methylguanosine(46) in tRNA + S-adenosyl-L-homocysteine. Its pathway is tRNA modification; N(7)-methylguanine-tRNA biosynthesis. Its function is as follows. Catalyzes the formation of N(7)-methylguanine at position 46 (m7G46) in tRNA. The chain is tRNA (guanine-N(7)-)-methyltransferase from Corynebacterium efficiens (strain DSM 44549 / YS-314 / AJ 12310 / JCM 11189 / NBRC 100395).